We begin with the raw amino-acid sequence, 284 residues long: 2,3,4,5-tetrahydropyridine-2,6-dicarboxylate N-succinyltransferase (284 aa).

Belongs to the transferase hexapeptide repeat family.

It is found in the cytoplasm. The catalysed reaction is (S)-2,3,4,5-tetrahydrodipicolinate + succinyl-CoA + H2O = (S)-2-succinylamino-6-oxoheptanedioate + CoA. The protein operates within amino-acid biosynthesis; L-lysine biosynthesis via DAP pathway; LL-2,6-diaminopimelate from (S)-tetrahydrodipicolinate (succinylase route): step 1/3. In Brucella abortus (strain S19), this protein is 2,3,4,5-tetrahydropyridine-2,6-dicarboxylate N-succinyltransferase.